Reading from the N-terminus, the 205-residue chain is Probable nicotinate-nucleotide adenylyltransferase (205 aa).

This sequence belongs to the NadD family.

It catalyses the reaction nicotinate beta-D-ribonucleotide + ATP + H(+) = deamido-NAD(+) + diphosphate. Its pathway is cofactor biosynthesis; NAD(+) biosynthesis; deamido-NAD(+) from nicotinate D-ribonucleotide: step 1/1. Its function is as follows. Catalyzes the reversible adenylation of nicotinate mononucleotide (NaMN) to nicotinic acid adenine dinucleotide (NaAD). The protein is Probable nicotinate-nucleotide adenylyltransferase of Arthrobacter sp. (strain FB24).